Consider the following 373-residue polypeptide: Unsaturated rhamnogalacturonyl hydrolase YteR (373 aa).

Residues 40–41 (HY), Asp88, and 132–136 (HKDGY) contribute to the substrate site. The Proton donor role is filled by Asp143. Substrate contacts are provided by residues 213–217 (RSIGW) and 333–334 (TS).

Belongs to the glycosyl hydrolase 105 family. In terms of assembly, monomer.

The protein resides in the cytoplasm. It catalyses the reaction 2-O-(4-deoxy-beta-L-threo-hex-4-enopyranuronosyl)-alpha-L-rhamnose + H2O = 5-dehydro-4-deoxy-D-glucuronate + L-rhamnopyranose. Functionally, catalyzes the hydrolysis of unsaturated rhamnogalacturonan disaccharide to yield unsaturated D-galacturonic acid and L-rhamnose. It cannot act on unsaturated glucuronyl hydrolase (UGL) substrates containing unsaturated D-glucuronic acid at the non-reducing terminus, although the active pockets of YesR and UGL are very similar. The polypeptide is Unsaturated rhamnogalacturonyl hydrolase YteR (yteR) (Bacillus subtilis (strain 168)).